The chain runs to 214 residues: Probable transaldolase (214 aa).

Catalysis depends on Lys-83, which acts as the Schiff-base intermediate with substrate.

The protein belongs to the transaldolase family. Type 3B subfamily.

The protein localises to the cytoplasm. It carries out the reaction D-sedoheptulose 7-phosphate + D-glyceraldehyde 3-phosphate = D-erythrose 4-phosphate + beta-D-fructose 6-phosphate. It participates in carbohydrate degradation; pentose phosphate pathway; D-glyceraldehyde 3-phosphate and beta-D-fructose 6-phosphate from D-ribose 5-phosphate and D-xylulose 5-phosphate (non-oxidative stage): step 2/3. Functionally, transaldolase is important for the balance of metabolites in the pentose-phosphate pathway. The sequence is that of Probable transaldolase from Leptospira borgpetersenii serovar Hardjo-bovis (strain JB197).